The sequence spans 126 residues: Holo-[acyl-carrier-protein] synthase (126 aa).

Residues Asp8 and Glu57 each contribute to the Mg(2+) site.

The protein belongs to the P-Pant transferase superfamily. AcpS family. Mg(2+) serves as cofactor.

It localises to the cytoplasm. It carries out the reaction apo-[ACP] + CoA = holo-[ACP] + adenosine 3',5'-bisphosphate + H(+). In terms of biological role, transfers the 4'-phosphopantetheine moiety from coenzyme A to a Ser of acyl-carrier-protein. In Vibrio cholerae serotype O1 (strain ATCC 39541 / Classical Ogawa 395 / O395), this protein is Holo-[acyl-carrier-protein] synthase.